We begin with the raw amino-acid sequence, 86 residues long: RNA-binding protein Hfq (86 aa).

One can recognise a Sm domain in the interval Asp-9–Ile-68.

Belongs to the Hfq family. As to quaternary structure, homohexamer.

In terms of biological role, RNA chaperone that binds small regulatory RNA (sRNAs) and mRNAs to facilitate mRNA translational regulation in response to envelope stress, environmental stress and changes in metabolite concentrations. Also binds with high specificity to tRNAs. The sequence is that of RNA-binding protein Hfq from Pseudomonas fluorescens (strain Pf0-1).